We begin with the raw amino-acid sequence, 472 residues long: Aspartyl/glutamyl-tRNA(Asn/Gln) amidotransferase subunit B (472 aa).

It belongs to the GatB/GatE family. GatB subfamily. Heterotrimer of A, B and C subunits.

It catalyses the reaction L-glutamyl-tRNA(Gln) + L-glutamine + ATP + H2O = L-glutaminyl-tRNA(Gln) + L-glutamate + ADP + phosphate + H(+). The catalysed reaction is L-aspartyl-tRNA(Asn) + L-glutamine + ATP + H2O = L-asparaginyl-tRNA(Asn) + L-glutamate + ADP + phosphate + 2 H(+). Allows the formation of correctly charged Asn-tRNA(Asn) or Gln-tRNA(Gln) through the transamidation of misacylated Asp-tRNA(Asn) or Glu-tRNA(Gln) in organisms which lack either or both of asparaginyl-tRNA or glutaminyl-tRNA synthetases. The reaction takes place in the presence of glutamine and ATP through an activated phospho-Asp-tRNA(Asn) or phospho-Glu-tRNA(Gln). In Sulfolobus acidocaldarius (strain ATCC 33909 / DSM 639 / JCM 8929 / NBRC 15157 / NCIMB 11770), this protein is Aspartyl/glutamyl-tRNA(Asn/Gln) amidotransferase subunit B.